The following is a 179-amino-acid chain: Large ribosomal subunit protein uL5 (179 aa).

This sequence belongs to the universal ribosomal protein uL5 family. In terms of assembly, part of the 50S ribosomal subunit; part of the 5S rRNA/L5/L18/L25 subcomplex. Contacts the 5S rRNA and the P site tRNA. Forms a bridge to the 30S subunit in the 70S ribosome.

Its function is as follows. This is one of the proteins that bind and probably mediate the attachment of the 5S RNA into the large ribosomal subunit, where it forms part of the central protuberance. In the 70S ribosome it contacts protein S13 of the 30S subunit (bridge B1b), connecting the 2 subunits; this bridge is implicated in subunit movement. Contacts the P site tRNA; the 5S rRNA and some of its associated proteins might help stabilize positioning of ribosome-bound tRNAs. In Alkaliphilus oremlandii (strain OhILAs) (Clostridium oremlandii (strain OhILAs)), this protein is Large ribosomal subunit protein uL5.